Consider the following 185-residue polypeptide: Peptidoglycan-recognition protein SC1a (185 aa).

A signal peptide spans 1–21; that stretch reads MVSKVALLLAVLVCSQYMAQG. One can recognise an N-acetylmuramoyl-L-alanine amidase domain in the interval 46–170; it reads SYAIIHHTAG…RQVSATECPG (125 aa). His51 contacts Zn(2+). Cys58 and Cys64 are oxidised to a cystine. 2 residues coordinate Zn(2+): His160 and Cys168.

It belongs to the N-acetylmuramoyl-L-alanine amidase 2 family. It depends on Zn(2+) as a cofactor.

The protein localises to the secreted. It catalyses the reaction Hydrolyzes the link between N-acetylmuramoyl residues and L-amino acid residues in certain cell-wall glycopeptides.. In terms of biological role, N-acetylmuramyl-L-alanine amidase involved in innate immunity by degrading bacterial peptidoglycans (PGN). Plays a scavenger role by digesting biologically active PGN into biologically inactive fragments. Has no direct bacteriolytic activity. This is Peptidoglycan-recognition protein SC1a from Drosophila melanogaster (Fruit fly).